The following is a 143-amino-acid chain: Transcriptional regulator MraZ (143 aa).

2 SpoVT-AbrB domains span residues 5–47 and 76–119; these read THTP…PRAE and TDEQ…DAQA.

This sequence belongs to the MraZ family. Forms oligomers.

It localises to the cytoplasm. The protein resides in the nucleoid. In Mycobacterium leprae (strain Br4923), this protein is Transcriptional regulator MraZ.